Here is a 432-residue protein sequence, read N- to C-terminus: Probable D-serine dehydratase (432 aa).

Lys112 bears the N6-(pyridoxal phosphate)lysine mark.

The protein belongs to the serine/threonine dehydratase family. DsdA subfamily. Pyridoxal 5'-phosphate is required as a cofactor.

It catalyses the reaction D-serine = pyruvate + NH4(+). In Pediococcus pentosaceus (strain ATCC 25745 / CCUG 21536 / LMG 10740 / 183-1w), this protein is Probable D-serine dehydratase.